Here is a 130-residue protein sequence, read N- to C-terminus: Cholecystokinin (130 aa).

An N-terminal signal peptide occupies residues 1 to 20 (MYIGICICVLLAALSASSTG). The propeptide occupies 21-60 (QQTVGSMNEDPGAREIEQQNILQHPRHIRASSSAQLKPFQ). At Y112 the chain carries Sulfotyrosine. F118 is subject to Phenylalanine amide. Residues 122–130 (SAEEYEYSS) constitute a propeptide that is removed on maturation. Sulfotyrosine occurs at positions 126 and 128.

The protein belongs to the gastrin/cholecystokinin family. In terms of processing, the precursor is cleaved by proteases to produce a number of active cholecystokinins. As to expression, expressed in brain, lung, testis and throughout the length of the small intestine. In the brain, expressed predominantly in the optic tectum and brain stem.

The protein resides in the secreted. Its function is as follows. This peptide hormone induces gall bladder contraction and the release of pancreatic enzymes in the gut. Its function in the brain is not clear. The chain is Cholecystokinin (CCK) from Aquarana catesbeiana (American bullfrog).